We begin with the raw amino-acid sequence, 1125 residues long: Transcription-repair-coupling factor (1125 aa).

The Helicase ATP-binding domain occupies aspartate 597–leucine 758. Residue glycine 610 to threonine 617 participates in ATP binding. Residues aspartate 711–glutamine 714 carry the DEEQ box motif. Residues serine 774–glutamate 933 enclose the Helicase C-terminal domain.

In the N-terminal section; belongs to the UvrB family. It in the C-terminal section; belongs to the helicase family. RecG subfamily.

It is found in the cytoplasm. In terms of biological role, couples transcription and DNA repair by recognizing RNA polymerase (RNAP) stalled at DNA lesions. Mediates ATP-dependent release of RNAP and its truncated transcript from the DNA, and recruitment of nucleotide excision repair machinery to the damaged site. The protein is Transcription-repair-coupling factor of Borreliella burgdorferi (strain ATCC 35210 / DSM 4680 / CIP 102532 / B31) (Borrelia burgdorferi).